A 291-amino-acid chain; its full sequence is MSWSRHWPAPAKINLFLHILGRRPDGYHRLQTAFQILDRGDELAFRVRPDGELRRRGGLDHVPPDQDLTVRAARLLQQTTGCRLGADIVLDKRLPDGGGLGGGSSNAATVLQALNRLWGTGLSTLELAGLGLRLGADVPVFVHGRTAWAEGVGERLTPIETPSRWFLVVHPGCRVSTAEVFAAEGLTRDSAPSTISALRAGRVRNDCEPWVRAHYRAVDEALGWLSRFAPARMTGTGACVFAPFEREAQARAALDRLPAAWQGFVAQGVACSSLLGRLRGEQDSADRDGPT.

Lys-12 is an active-site residue. 95 to 105 (PDGGGLGGGSS) contributes to the ATP binding site. Residue Asp-137 is part of the active site.

Belongs to the GHMP kinase family. IspE subfamily.

The catalysed reaction is 4-CDP-2-C-methyl-D-erythritol + ATP = 4-CDP-2-C-methyl-D-erythritol 2-phosphate + ADP + H(+). It participates in isoprenoid biosynthesis; isopentenyl diphosphate biosynthesis via DXP pathway; isopentenyl diphosphate from 1-deoxy-D-xylulose 5-phosphate: step 3/6. Its function is as follows. Catalyzes the phosphorylation of the position 2 hydroxy group of 4-diphosphocytidyl-2C-methyl-D-erythritol. The sequence is that of 4-diphosphocytidyl-2-C-methyl-D-erythritol kinase from Alkalilimnicola ehrlichii (strain ATCC BAA-1101 / DSM 17681 / MLHE-1).